Consider the following 431-residue polypeptide: Trigger factor (431 aa).

One can recognise a PPIase FKBP-type domain in the interval 164-249; the sequence is GNIAVIDFKG…IKEIKVKELP (86 aa).

Belongs to the FKBP-type PPIase family. Tig subfamily.

Its subcellular location is the cytoplasm. The enzyme catalyses [protein]-peptidylproline (omega=180) = [protein]-peptidylproline (omega=0). Its function is as follows. Involved in protein export. Acts as a chaperone by maintaining the newly synthesized protein in an open conformation. Functions as a peptidyl-prolyl cis-trans isomerase. In Clostridium tetani (strain Massachusetts / E88), this protein is Trigger factor.